The primary structure comprises 866 residues: Leucine--tRNA ligase (866 aa).

The short motif at 42 to 52 (PYPSGKLHMGH) is the 'HIGH' region element. Positions 624-628 (TMSKS) match the 'KMSKS' region motif. Residue lysine 627 participates in ATP binding.

The protein belongs to the class-I aminoacyl-tRNA synthetase family.

It is found in the cytoplasm. The enzyme catalyses tRNA(Leu) + L-leucine + ATP = L-leucyl-tRNA(Leu) + AMP + diphosphate. This Nitrosospira multiformis (strain ATCC 25196 / NCIMB 11849 / C 71) protein is Leucine--tRNA ligase.